A 185-amino-acid chain; its full sequence is Ribosome-recycling factor (185 aa).

It belongs to the RRF family.

Its subcellular location is the cytoplasm. Functionally, responsible for the release of ribosomes from messenger RNA at the termination of protein biosynthesis. May increase the efficiency of translation by recycling ribosomes from one round of translation to another. The chain is Ribosome-recycling factor from Edwardsiella ictaluri (strain 93-146).